We begin with the raw amino-acid sequence, 266 residues long: Putative peptidyl-prolyl cis-trans isomerase NifM (266 aa).

The region spanning 124-221 (PEQRLTRHLL…LGWHLLWCEA (98 aa)) is the PpiC domain.

This sequence belongs to the PpiC/parvulin rotamase family.

It catalyses the reaction [protein]-peptidylproline (omega=180) = [protein]-peptidylproline (omega=0). In terms of biological role, required for the activation and stabilization of the iron-component (NifH) of nitrogenase. Probable PPIase. This Klebsiella oxytoca protein is Putative peptidyl-prolyl cis-trans isomerase NifM (nifM).